The sequence spans 86 residues: Anti-adapter protein IraP (86 aa).

A coiled-coil region spans residues 1 to 36 (MKNLIAELLFKLAQKEEESKELCAQVEALEIIVTAM).

It belongs to the IraP family. In terms of assembly, interacts with RssB.

Its subcellular location is the cytoplasm. Inhibits RpoS proteolysis by regulating RssB activity, thereby increasing the stability of the sigma stress factor RpoS especially during phosphate starvation, but also in stationary phase and during nitrogen starvation. Its effect on RpoS stability is due to its interaction with RssB, which probably blocks the interaction of RssB with RpoS, and the consequent delivery of the RssB-RpoS complex to the ClpXP protein degradation pathway. This Escherichia coli (strain SE11) protein is Anti-adapter protein IraP.